The sequence spans 507 residues: MAWALKLPLADEVIESGLVQDFDASLSGIGQELGAGAYSMSDVLALPIFKQEESSLPSENENKILPFQYVLCTATSPAVKLHEETLTYLNQGQSYEIRMLDNRKMGELPELNGKLVKSIFRVVFHDRRLQYTEHQQLEGWRWNRPGDRILDIDIPMSVGIIDPRANPTQLNTVEFLWDPAKRTSVFIQVHCISTEFTMRKHGGEKGVPFRVQIDTFKENENGEYTEHLHSASCQIKVFKPKGADRKQKTDREKMEKRTPQEKEKYQPSYETTILTECSPWPEITYVSNAPSPGFNSSHNSFPIGEGNGSPNHQPEPPAPIVDVSAGLTPIQNLLPTSTPQEAQQWLHRNRFAAFSRLFTNFSGADLLKLTRDDVIQICGPADGIRLFNALKGRMVRPRLTIYVCQESQQLREQQQQHKHENGEAGNSAFYVYHAIYLEEMTAIELTEKIAQLFSISPHQINQIYKQGPTGIHVLISDEMIQNFQDESCFILDTMKAETNDSYHIILK.

The Grh/CP2 DB domain occupies 61 to 300; that stretch reads ENKILPFQYV…SPGFNSSHNS (240 aa). Residues 133–395 form a DNA-binding region; it reads EHQQLEGWRW…LFNALKGRMV (263 aa). 2 disordered regions span residues 240-268 and 296-316; these read PKGA…YQPS and SSHN…QPEP. Residues 241 to 265 are compositionally biased toward basic and acidic residues; that stretch reads KGADRKQKTDREKMEKRTPQEKEKY.

The protein belongs to the grh/CP2 family. CP2 subfamily. As to quaternary structure, component of the SSP (stage selector protein) complex, which appears to be a heteromer of TFCP2 and 2 copies of NFE4.

The protein resides in the nucleus. Functionally, may function as a transcription factor. This chain is Transcription factor CP2 (tfcp2), found in Xenopus tropicalis (Western clawed frog).